We begin with the raw amino-acid sequence, 331 residues long: Nucleotide-binding protein SGR_5570 (331 aa).

The disordered stretch occupies residues M1 to G43. G55–S62 provides a ligand contact to ATP. D106–G109 lines the GTP pocket.

Belongs to the RapZ-like family.

Functionally, displays ATPase and GTPase activities. In Streptomyces griseus subsp. griseus (strain JCM 4626 / CBS 651.72 / NBRC 13350 / KCC S-0626 / ISP 5235), this protein is Nucleotide-binding protein SGR_5570.